The sequence spans 196 residues: Putative 3-methyladenine DNA glycosylase (196 aa).

The protein belongs to the DNA glycosylase MPG family.

This is Putative 3-methyladenine DNA glycosylase from Chlorobium phaeovibrioides (strain DSM 265 / 1930) (Prosthecochloris vibrioformis (strain DSM 265)).